Consider the following 1253-residue polypeptide: Cytoplasmic FMR1-interacting protein 1 homolog (1253 aa).

The protein belongs to the CYFIP family.

The protein resides in the cytoplasm. It localises to the perinuclear region. The protein localises to the cell projection. It is found in the lamellipodium. Its subcellular location is the ruffle. The protein resides in the synapse. It localises to the synaptosome. Functionally, involved in formation of membrane ruffles and lamellipodia protrusions and in axon outgrowth. Binds to F-actin but not to RNA. The chain is Cytoplasmic FMR1-interacting protein 1 homolog from Danio rerio (Zebrafish).